The following is a 258-amino-acid chain: UPF0328 protein ECU02_0090 (258 aa).

It belongs to the UPF0328 family.

In Encephalitozoon cuniculi (strain GB-M1) (Microsporidian parasite), this protein is UPF0328 protein ECU02_0090.